The primary structure comprises 817 residues: Myosin-A (817 aa).

Residue Ser19 is modified to Phosphoserine. Positions 97 to 771 (MSFGDIGLLN…GAKMLSKIQR (675 aa)) constitute a Myosin motor domain. Residue 191 to 198 (GESGAGKT) coordinates ATP. Residues 661–671 (PHFIRCIKPNE) are actin-binding. The segment at 773-817 (KLVEWENCVSVIEAAIMKYKHKQNVENNVSSLMRVQAHIRKRMVA) is tail.

This sequence belongs to the TRAFAC class myosin-kinesin ATPase superfamily. Myosin family. As to quaternary structure, interacts with ACT1.

The protein localises to the cell membrane. Myosins are actin-based motor molecules with ATPase activity. Unconventional myosins serve in intracellular movements. Their highly divergent tails are presumed to bind to membranous compartments, which would be moved relative to actin filaments. In Plasmodium yoelii yoelii, this protein is Myosin-A.